The sequence spans 538 residues: Inositol-3-phosphate synthase (538 aa).

Positions 74, 75, 76, 77, 150, 186, 187, 197, 198, 200, 247, 248, 249, 250, 298, 299, 323, 326, 357, 358, 359, 372, 412, 413, 441, and 442 each coordinate NAD(+).

This sequence belongs to the myo-inositol 1-phosphate synthase family. In terms of assembly, homotetramer. The cofactor is NAD(+).

It localises to the cytoplasm. It carries out the reaction D-glucose 6-phosphate = 1D-myo-inositol 3-phosphate. It participates in polyol metabolism; myo-inositol biosynthesis; myo-inositol from D-glucose 6-phosphate: step 1/2. Its function is as follows. Key enzyme in myo-inositol biosynthesis pathway that catalyzes the conversion of glucose 6-phosphate to 1-myo-inositol 1-phosphate in a NAD-dependent manner. Rate-limiting enzyme in the synthesis of all inositol-containing compounds. The sequence is that of Inositol-3-phosphate synthase (INO1) from Candida glabrata (strain ATCC 2001 / BCRC 20586 / JCM 3761 / NBRC 0622 / NRRL Y-65 / CBS 138) (Yeast).